A 293-amino-acid polypeptide reads, in one-letter code: GPN-loop GTPase 3 (293 aa).

GTP is bound at residue 13–18 (GAGKST). The Gly-Pro-Asn (GPN)-loop; involved in dimer interface signature appears at 70-72 (GPN). Position 176 to 179 (176 to 179 (SKMD)) interacts with GTP. Basic and acidic residues predominate over residues 272–281 (HEAQEPREPN). The interval 272–293 (HEAQEPREPNDEQDVDYEDADI) is disordered. Residues 282-293 (DEQDVDYEDADI) show a composition bias toward acidic residues.

This sequence belongs to the GPN-loop GTPase family. Heterodimers with gpn1 or gpn2. Binds to RNA polymerase II (RNAPII).

Its function is as follows. Small GTPase required for proper nuclear import of RNA polymerase II and III (RNAPII and RNAPIII). May act at an RNAP assembly step prior to nuclear import. The protein is GPN-loop GTPase 3 of Aspergillus fumigatus (strain ATCC MYA-4609 / CBS 101355 / FGSC A1100 / Af293) (Neosartorya fumigata).